Consider the following 571-residue polypeptide: uncharacterized protein (571 aa).

11 consecutive transmembrane segments (helical) span residues 5 to 27 (VILNVLKNPFIALFLTLSLGYLV), 34 to 56 (TFVLGGISGSLIIGVIIGQLNIT), 61 to 79 (IGSLFFALFIYAGGYQGGA), 92 to 114 (LLASSTITCVLGLLCVLVFAWIF), 161 to 183 (TVGYAVCYIFGSFGPIILLATIF), 391 to 408 (FIFFGLGMVLGYIFGLIS), 412 to 434 (FGISITLGAGVDCLLSGLIFGWI), 455 to 474 (LGLAIFVASVGITAGPQAIT), 484 to 506 (FFLGIGVTIIPQVISFYISYYLL), 513 to 532 (VLLATIAGGRSVNPGFAALL), and 547 to 569 (SYALANIWLTLWGPVIVALVTII).

Belongs to the AAE transporter (TC 2.A.81) family.

The protein resides in the cell membrane. This is an uncharacterized protein from Francisella tularensis subsp. tularensis (strain SCHU S4 / Schu 4).